The sequence spans 1049 residues: Desmoglein-1 (1049 aa).

The signal sequence occupies residues 1–23; that stretch reads MDWSFFRVVAMLFIFLVVVEVNS. Residues 24 to 49 constitute a propeptide that is removed on maturation; it reads EFRIQVRDYNTKNGTIKWHSIRRQKR. N-linked (GlcNAc...) asparagine glycosylation is found at asparagine 36, asparagine 110, and asparagine 180. Cadherin domains are found at residues 50–158, 159–270, 271–385, and 386–497; these read EWIK…PVFS, MATF…PYME, QSSY…GPVF, and RPGS…TEPN. Over 50-548 the chain is Extracellular; it reads EWIKFAAACR…LLSDNVHFGP (499 aa). A disordered region spans residues 485 to 534; that stretch reads SFGNDDRTNTEPNTKITTNTGRQESTSSTNYDTSTTSTDSSQVYSSEPGN. A compositionally biased stretch (polar residues) spans 494-508; sequence TEPNTKITTNTGRQE. Positions 509–530 are enriched in low complexity; that stretch reads STSSTNYDTSTTSTDSSQVYSS. The helical transmembrane segment at 549–569 threads the bilayer; sequence AGIGLLIMGFLVLGLVPFLMI. At 570–1049 the chain is on the cytoplasmic side; sequence CCDCGGAPRS…TKYSTVQYSK (480 aa). Serine 579 carries the phosphoserine modification. Desmoglein repeat repeat units follow at residues 813–839, 840–869, 870–899, 900–927, and 928–956; these read TYPS…TVTE, SYTT…ERVV, GPIS…ERVI, APSS…ERVI, and QPTS…ERVV. Residues 1014-1035 form a disordered region; sequence HMRSSSDHHFNQTIGSASPSTA. Over residues 1024-1035 the composition is skewed to polar residues; that stretch reads NQTIGSASPSTA.

As to quaternary structure, binds to JUP/plakoglobin. Interacts with PKP2. Interacts with DSC3; there is evidence to suggest that the interaction promotes cell-cell adhesion of keratinocytes. In terms of assembly, (Microbial infection) Interacts with Staphylococcus aureus protein SdrD; this interaction increases S.aureus adherence to keratinocytes. In terms of tissue distribution, expressed in all suprabasal layers of the epidermis, with the highest expression seen in the granular layer (at protein level).

The protein localises to the cell membrane. It localises to the cell junction. The protein resides in the desmosome. It is found in the cytoplasm. Its subcellular location is the nucleus. Its function is as follows. Component of intercellular desmosome junctions. Involved in the interaction of plaque proteins and intermediate filaments mediating cell-cell adhesion. The polypeptide is Desmoglein-1 (DSG1) (Homo sapiens (Human)).